A 70-amino-acid chain; its full sequence is DNA-directed RNA polymerase subunit omega (70 aa).

It belongs to the RNA polymerase subunit omega family. In terms of assembly, the RNAP catalytic core consists of 2 alpha, 1 beta, 1 beta' and 1 omega subunit. When a sigma factor is associated with the core the holoenzyme is formed, which can initiate transcription.

It catalyses the reaction RNA(n) + a ribonucleoside 5'-triphosphate = RNA(n+1) + diphosphate. In terms of biological role, promotes RNA polymerase assembly. Latches the N- and C-terminal regions of the beta' subunit thereby facilitating its interaction with the beta and alpha subunits. The sequence is that of DNA-directed RNA polymerase subunit omega from Staphylococcus saprophyticus subsp. saprophyticus (strain ATCC 15305 / DSM 20229 / NCIMB 8711 / NCTC 7292 / S-41).